Consider the following 421-residue polypeptide: MEF2-activating motif and SAP domain-containing transcriptional regulator (421 aa).

Positions 12-28 match the MEF2-binding motif; that stretch reads IIRSKFRSVLQLRIHRR. Disordered regions lie at residues 104 to 156, 188 to 296, and 322 to 406; these read PPEQ…PPSH, KAML…ASLT, and DQVE…ADLS. The 35-residue stretch at 165–199 folds into the SAP domain; that stretch reads LEELTVSELRQQLRLRGLPVSGTKAMLLERMRGGT. Over residues 191 to 214 the composition is skewed to basic and acidic residues; it reads LLERMRGGTPPRERPKPRREDKEA. Positions 208 to 421 are transcription activation; that stretch reads RREDKEAAAP…LLWELLPDPW (214 aa). Residues 230 to 241 show a composition bias toward polar residues; it reads RLPSTVKASATN. The segment covering 260-292 has biased composition (pro residues); sequence ASVPAPTPSPALAPTPTPAPVPAPAPAPFPTPP. Residues 347–372 are compositionally biased toward low complexity; sequence SPDSEGFSSVFSSSLPSPTSSLSPSP.

Interacts with MEF2C. Expressed in skeletal muscle, brain, placenta and spleen.

It localises to the nucleus. Functionally, transcriptional coactivator. Stimulates the transcriptional activity of MEF2C. Stimulates MYOD1 activity in part via MEF2, resulting in an enhancement of skeletal muscle differentiation. The sequence is that of MEF2-activating motif and SAP domain-containing transcriptional regulator (Mamstr) from Mus musculus (Mouse).